Reading from the N-terminus, the 75-residue chain is Signaling peptide TAXIMIN 1 (75 aa).

A signal peptide spans Met-1–Val-29.

Expressed in shoot apical meristems (SAM); mostly specific to the L1 layer in the center of the meristem but also detected in the L2 layer in organ primordia. Also observed in the vasculature of seedling roots.

Its subcellular location is the secreted. Its activity is regulated as follows. Counteracted by the antibiotic cefotaxime during responses to light stress. Signaling peptide involved in the regulation of lateral organs separation, including fruits and leaves. Involved in the perception of and response to light stress via the control of sinapoyl-malate accumulation, a UV-B protecting compound. The protein is Signaling peptide TAXIMIN 1 of Arabidopsis thaliana (Mouse-ear cress).